A 225-amino-acid chain; its full sequence is Two-component response regulator PhoP (225 aa).

A Response regulatory domain is found at 2–116 (KLLVVEDEAL…ELEARLNALL (115 aa)). Position 51 is a 4-aspartylphosphate (Asp-51). A DNA-binding region (ompR/PhoB-type) is located at residues 124–222 (QSTIEAGPLV…VRGQGYLFTE (99 aa)).

Member of the two-component regulatory system PhoP/PhoQ that plays a role in the regulation of resistance towards polymyxin B and cationic antimicrobial peptides in response to limiting concentrations of Mg(2+). Functions as a transcriptional activator by direct binding to a cis-acting sequence upstream of the target gene promoters including oprH and pmrH promoters. The protein is Two-component response regulator PhoP (phoP) of Pseudomonas aeruginosa (strain ATCC 15692 / DSM 22644 / CIP 104116 / JCM 14847 / LMG 12228 / 1C / PRS 101 / PAO1).